A 237-amino-acid chain; its full sequence is Exosome complex component Rrp4 (237 aa).

The region spanning 72–144 (GHIVVGKVVD…LSKDPVLTIK (73 aa)) is the S1 motif domain. The region spanning 152 to 211 (PRGTLVEIPPQKVPRVIGRRGSMVSMIEDLLGVKLIVGQNGRIVVVGDDPQRVEIAVLAV) is the KH domain.

This sequence belongs to the RRP4 family. In terms of assembly, component of the archaeal exosome complex. Forms a trimer of Rrp4 and/or Csl4 subunits. The trimer associates with a hexameric ring-like arrangement composed of 3 Rrp41-Rrp42 heterodimers.

It is found in the cytoplasm. In terms of biological role, non-catalytic component of the exosome, which is a complex involved in RNA degradation. Increases the RNA binding and the efficiency of RNA degradation. Confers strong poly(A) specificity to the exosome. This Thermofilum pendens (strain DSM 2475 / Hrk 5) protein is Exosome complex component Rrp4.